The following is a 426-amino-acid chain: Diaminobutyrate--2-oxoglutarate transaminase (426 aa).

The residue at position 272 (Lys-272) is an N6-(pyridoxal phosphate)lysine.

It belongs to the class-III pyridoxal-phosphate-dependent aminotransferase family. Pyridoxal 5'-phosphate is required as a cofactor.

The catalysed reaction is L-2,4-diaminobutanoate + 2-oxoglutarate = L-aspartate 4-semialdehyde + L-glutamate. Its pathway is amine and polyamine biosynthesis; ectoine biosynthesis; L-ectoine from L-aspartate 4-semialdehyde: step 1/3. Catalyzes reversively the conversion of L-aspartate beta-semialdehyde (ASA) to L-2,4-diaminobutyrate (DABA) by transamination with L-glutamate. This Sporosarcina pasteurii (Bacillus pasteurii) protein is Diaminobutyrate--2-oxoglutarate transaminase (ectB).